Here is a 448-residue protein sequence, read N- to C-terminus: Phosphoglucosamine mutase (448 aa).

Residue Ser-100 is the Phosphoserine intermediate of the active site. The Mg(2+) site is built by Ser-100, Asp-240, Asp-242, and Asp-244. Position 100 is a phosphoserine (Ser-100).

It belongs to the phosphohexose mutase family. Mg(2+) is required as a cofactor. Activated by phosphorylation.

The catalysed reaction is alpha-D-glucosamine 1-phosphate = D-glucosamine 6-phosphate. Its function is as follows. Catalyzes the conversion of glucosamine-6-phosphate to glucosamine-1-phosphate. This Bacillus cytotoxicus (strain DSM 22905 / CIP 110041 / 391-98 / NVH 391-98) protein is Phosphoglucosamine mutase.